Here is a 275-residue protein sequence, read N- to C-terminus: Large ribosomal subunit protein uL2c (275 aa).

The disordered stretch occupies residues 222 to 258; the sequence is GSAMNPVDHPHGGGEGRAPIGRARPVSPWGRPALGAK.

Belongs to the universal ribosomal protein uL2 family. Part of the 50S ribosomal subunit.

Its subcellular location is the plastid. The protein localises to the chloroplast. This is Large ribosomal subunit protein uL2c (rpl2) from Chlorella vulgaris (Green alga).